A 593-amino-acid chain; its full sequence is Vicilin Jug r 2.0101 (593 aa).

Composition is skewed to basic and acidic residues over residues 46-76 (LEED…EQRY) and 97-118 (RRCE…DRQD). Residues 46-123 (LEEDQRSQEE…RDRQDPQQQY (78 aa)) are disordered. IgE-binding regions lie at residues 49-58 (DQRSQEERER), 76-85 (YEQCQQQCER), and 101-110 (QRRQQEERER). The igE-binding. Involved in cross-reactivity with peanut allergen Ara h 2; able to inhibit binding of IgE from a peanut-allergic patient to Ara h 2 stretch occupies residues 140–149 (QRQCQQRCER). Basic and acidic residues predominate over residues 150-178 (QYKEQQGRERGPEASPRRESRGREEEQQR). The disordered stretch occupies residues 150–184 (QYKEQQGRERGPEASPRRESRGREEEQQRHNPYYF). 2 T-cell epitope; recognized by the HLA-DRB1-restricted CD4(+) T-cells regions span residues 175–193 (EQQR…RSRH) and 206–225 (FTER…VILD). Tyr182 provides a ligand contact to Cu cation. 2 Cupin type-1 domains span residues 187-341 (QSIR…DRLE) and 386-556 (ISLK…EEIE). N-linked (GlcNAc...) asparagine glycosylation is present at Asn229. T-cell epitope; recognized by the HLA-DRB1-restricted CD4(+) T-cells regions lie at residues 246–265 (TRGR…SFNL), 302–321 (PGQF…QSYL), 318–337 (QSYL…NTPR), 382–401 (SGGP…QFGQ), 414–433 (QEMD…MMVP), and 438–457 (KATV…MACP). Cu cation contacts are provided by Cys456 and His458. Residues 463–470 (SYEGQGRR) form an igE-binding region. A T-cell epitope; recognized by the HLA-DRB1-restricted CD4(+) T-cells region spans residues 478 to 497 (TGRFQKVTARLARGDIFVIP). His500 is a Cu cation binding site. The stretch at 529–556 (LAGQNNIINQLEREAKELSFNMPREEIE) forms a coiled coil. Residues 541 to 555 (REAKELSFNMPREEI) form an igE-binding region. T-cell epitope; recognized by the HLA-DRB1-restricted CD4(+) T-cells stretches follow at residues 542–561 (EAKE…IFES) and 558–577 (IFES…SRRG).

Belongs to the 7S seed storage protein family. Post-translationally, proteolytically cleaved. As to expression, expressed in seed (at protein level).

Seed storage protein. In Juglans regia (English walnut), this protein is Vicilin Jug r 2.0101.